A 173-amino-acid polypeptide reads, in one-letter code: Disulfide bond formation protein B 2 (173 aa).

Topologically, residues 1 to 9 (MSLAGSRLL) are cytoplasmic. Residues 10 to 26 (FSLVFLVGALASWAAFN) traverse the membrane as a helical segment. The Periplasmic portion of the chain corresponds to 27-44 (LQTGGGLESCSLWSVQRL). A helical transmembrane segment spans residues 45–61 (LLLALGGVNLLAVIQGP). Residues 62–67 (GRVGRA) lie on the Cytoplasmic side of the membrane. Residues 68–85 (VYWGLNLLLGLLGVVTAG) form a helical membrane-spanning segment. Topologically, residues 86–142 (RHVLLQNIPSEQLLACLPDMSFMLRQLSWWQALKLTFMGTSDCAEVTWTLLDMSLPE) are periplasmic. Cys-101 and Cys-128 form a disulfide bridge. The chain crosses the membrane as a helical span at residues 143–161 (WSLLFFVIMLIFSGYRLWR). Residues 162–173 (QLRGARKAVALP) are Cytoplasmic-facing.

It belongs to the DsbB family.

The protein resides in the cell inner membrane. In terms of biological role, required for disulfide bond formation in some periplasmic proteins. Acts by oxidizing the DsbA protein. In Pseudomonas fluorescens (strain ATCC BAA-477 / NRRL B-23932 / Pf-5), this protein is Disulfide bond formation protein B 2.